Consider the following 87-residue polypeptide: Translation initiation factor IF-1 2 (87 aa).

In terms of domain architecture, S1-like spans 1–72 (MAKEELLELD…TKGRINFRHK (72 aa)). The interval 68–87 (NFRHKDANSPRPPRSGQPRR) is disordered. Over residues 77 to 87 (PRPPRSGQPRR) the composition is skewed to pro residues.

Belongs to the IF-1 family. Component of the 30S ribosomal translation pre-initiation complex which assembles on the 30S ribosome in the order IF-2 and IF-3, IF-1 and N-formylmethionyl-tRNA(fMet); mRNA recruitment can occur at any time during PIC assembly.

The protein localises to the cytoplasm. One of the essential components for the initiation of protein synthesis. Stabilizes the binding of IF-2 and IF-3 on the 30S subunit to which N-formylmethionyl-tRNA(fMet) subsequently binds. Helps modulate mRNA selection, yielding the 30S pre-initiation complex (PIC). Upon addition of the 50S ribosomal subunit IF-1, IF-2 and IF-3 are released leaving the mature 70S translation initiation complex. This chain is Translation initiation factor IF-1 2, found in Burkholderia cenocepacia (strain HI2424).